The following is a 71-amino-acid chain: uncharacterized protein (71 aa).

The interval 1–20 (MQKLNKHLKKKKQKRKKMKK) is disordered.

This is an uncharacterized protein from Methanocaldococcus jannaschii (strain ATCC 43067 / DSM 2661 / JAL-1 / JCM 10045 / NBRC 100440) (Methanococcus jannaschii).